Here is a 249-residue protein sequence, read N- to C-terminus: 5'-nucleotidase SurE (249 aa).

D8, D9, S39, and N91 together coordinate a divalent metal cation.

The protein belongs to the SurE nucleotidase family. It depends on a divalent metal cation as a cofactor.

The protein resides in the cytoplasm. The enzyme catalyses a ribonucleoside 5'-phosphate + H2O = a ribonucleoside + phosphate. Functionally, nucleotidase that shows phosphatase activity on nucleoside 5'-monophosphates. This is 5'-nucleotidase SurE from Vesicomyosocius okutanii subsp. Calyptogena okutanii (strain HA).